The primary structure comprises 319 residues: MASPAAGGVVIIGSGLIGRSWAMLFASGGFKVKLYDIEQQQITNALESIRKEMKSLEQSGSLKGSLGAEQQLSLISGCGNLAEAVEGAMHIQECVPENLELKKKIFAQLDRIVDDQVILSSSSSCLLPSKLFTGLAHVKQCIVAHPVNPPYYVPLVELVPHPETAPATMDRTYALMKKIRQTPVRVLKEIDGFVLNRLQYAIISEAWRLVEEGIVSPNDLDLVMSDGLGMRYAFIGPLETMHLNAEGMVSYCDRYSEGMKRVLKTFGPVPEFSGDTVEKVNQDMCMKVPDDPEHLAARRHWRDDCLMQLSKLKHQMQPQ.

Ala-2 is subject to N-acetylalanine. A Phosphoserine modification is found at Ser-3. Residues Leu-16–Ile-17, Asp-36, Glu-97, and Lys-102 each bind NAD(+).

The protein belongs to the 3-hydroxyacyl-CoA dehydrogenase family. As to quaternary structure, homodimer.

Its subcellular location is the cytoplasm. The catalysed reaction is L-gulonate + NAD(+) = 3-dehydro-L-gulonate + NADH + H(+). Inhibited by malonate. Its function is as follows. Has high L-gulonate 3-dehydrogenase activity. It also exhibits low dehydrogenase activity toward L-3-hydroxybutyrate (HBA) and L-threonate. The sequence is that of Lambda-crystallin homolog (Cryl1) from Rattus norvegicus (Rat).